Consider the following 103-residue polypeptide: Putative glutaredoxin-C14 (103 aa).

The 102-residue stretch at 1–102 (MDRVMKLASE…PMLKNAGALW (102 aa)) folds into the Glutaredoxin domain. A disulfide bond links cysteine 21 and cysteine 24. The short motif at 100 to 103 (ALWL) is the Responsive for interaction with TGA factors element.

The protein belongs to the glutaredoxin family. CC-type subfamily.

The protein resides in the cytoplasm. It localises to the nucleus. In terms of biological role, has a glutathione-disulfide oxidoreductase activity in the presence of NADPH and glutathione reductase. Reduces low molecular weight disulfides and proteins. In Oryza sativa subsp. japonica (Rice), this protein is Putative glutaredoxin-C14 (GRXC14).